The primary structure comprises 458 residues: Serine/threonine-protein kinase tricornered (458 aa).

The Protein kinase domain maps to F92–F389. Residues I98–V106 and K121 each bind ATP. Positions Y118–T179 are interaction with mats and Mob1. D215 serves as the catalytic Proton acceptor. S287 is subject to Phosphoserine. The region spanning R390 to E458 is the AGC-kinase C-terminal domain. T448 carries the phosphothreonine modification.

Belongs to the protein kinase superfamily. AGC Ser/Thr protein kinase family. Interacts with, and is activated by, Mob1. Requires Mg(2+) as cofactor.

The protein resides in the cytoplasm. The protein localises to the nucleus. It carries out the reaction L-seryl-[protein] + ATP = O-phospho-L-seryl-[protein] + ADP + H(+). It catalyses the reaction L-threonyl-[protein] + ATP = O-phospho-L-threonyl-[protein] + ADP + H(+). In terms of biological role, serine/threonine-protein kinase involved in controlling cell structure and proliferation of a variety of polarized outgrowths including epidermal hairs, bristles, arista laterals, and dendrites. Together with fry, maintains the integrity of epidermal hairs and is an essential component of the signaling pathway regulating dendritic branching of sensory neurons. Reduces neurite outgrowth by phosphorylating pav/pavarotti, thereby inhibiting its function in microtubule-microtubule sliding. The sequence is that of Serine/threonine-protein kinase tricornered from Drosophila pseudoobscura pseudoobscura (Fruit fly).